The chain runs to 698 residues: Ubiquitin-like modifier-activating enzyme ATG7 (698 aa).

The FAP motif signature appears at 11 to 13 (FAP). Lys41 is covalently cross-linked (Glycyl lysine isopeptide (Lys-Gly) (interchain with G-Cter in ubiquitin)). Cys567 functions as the Glycyl thioester intermediate in the catalytic mechanism. The residue at position 693 (Ser693) is a Phosphoserine.

It belongs to the ATG7 family. Homodimer. Interacts with ATG3; this interaction is essential for the transfer of ATG8-like proteins's thioester from ATG7 to ATG3 and plays a role in the conjugation of ATG12 to ATG5. Interacts with ATG12. Forms intermediate conjugates with GABARAPL1. Forms intermediate conjugates with ATG8-like proteins such as GABARAP, GABARAPL2 or MAP1LC3A. Interacts with EP300 acetyltransferase. Interacts with FOXO1. Post-translationally, acetylated by EP300. Polyubiquitinated on Lys-41 via 'Lys-63'-linked ubiquitin by TRIM32; this modification positiely regulates ATG8 and ATG12 activating enzyme activity leading to initiation of autophagy under metabolic stress. In terms of tissue distribution, widely expressed.

It localises to the cytoplasm. The protein resides in the preautophagosomal structure. E1-like activating enzyme involved in the 2 ubiquitin-like systems required for cytoplasm to vacuole transport (Cvt) and autophagy. Activates ATG12 for its conjugation with ATG5 as well as the ATG8 family proteins for their conjugation with phosphatidylethanolamine. Both systems are needed for the ATG8 association to Cvt vesicles and autophagosomes membranes. Required for autophagic death induced by caspase-8 inhibition. Facilitates LC3-I lipidation with phosphatidylethanolamine to form LC3-II which is found on autophagosomal membranes. Required for mitophagy which contributes to regulate mitochondrial quantity and quality by eliminating the mitochondria to a basal level to fulfill cellular energy requirements and preventing excess ROS production. Modulates p53/TP53 activity to regulate cell cycle and survival during metabolic stress. Also plays a key role in the maintenance of axonal homeostasis, the prevention of axonal degeneration, the maintenance of hematopoietic stem cells, the formation of Paneth cell granules, as well as in adipose differentiation. Plays a role in regulating the liver clock and glucose metabolism by mediating the autophagic degradation of CRY1 (clock repressor) in a time-dependent manner. This is Ubiquitin-like modifier-activating enzyme ATG7 from Rattus norvegicus (Rat).